Consider the following 617-residue polypeptide: Serine/threonine-protein phosphatase 2A activator 1 (617 aa).

The segment covering 1-11 (MDPTSKRPPPA) has biased composition (pro residues). Disordered stretches follow at residues 1–25 (MDPT…PKLE), 84–169 (VSTS…ESES), 230–261 (GAGG…TNEQ), 376–398 (SSPN…SDIT), and 572–617 (RFTP…PWTK). Positions 84 to 93 (VSTSEPTTDG) are enriched in polar residues. A compositionally biased stretch (low complexity) spans 94–104 (QQQQQQQQQRQ). The span at 239-252 (EEGTETETETETEG) shows a compositional bias: acidic residues.

This sequence belongs to the PTPA-type PPIase family.

It is found in the cytoplasm. The protein resides in the nucleus. The enzyme catalyses [protein]-peptidylproline (omega=180) = [protein]-peptidylproline (omega=0). Its function is as follows. PPIases accelerate the folding of proteins. It catalyzes the cis-trans isomerization of proline imidic peptide bonds in oligopeptides. Acts as a regulatory subunit for PP2A-like phosphatases modulating their activity or substrate specificity, probably by inducing a conformational change in the catalytic subunit, a direct target of the PPIase. Can reactivate inactive phosphatase PP2A-phosphatase methylesterase complexes (PP2Ai) in presence of ATP and Mg(2+) by dissociating the inactive form from the complex. The polypeptide is Serine/threonine-protein phosphatase 2A activator 1 (rrd-1) (Neurospora crassa (strain ATCC 24698 / 74-OR23-1A / CBS 708.71 / DSM 1257 / FGSC 987)).